Consider the following 316-residue polypeptide: PHD finger protein 20-like protein 1 (316 aa).

The region spanning 11-71 (ITFEIGARLE…SNRLRPLERP (61 aa)) is the Tudor 1 domain. Glycyl lysine isopeptide (Lys-Gly) (interchain with G-Cter in SUMO2) cross-links involve residues Lys-75 and Lys-79. Residues 85-141 (FDFKAGEEVLARWTDCRYYPAKIEAINKEGTFTVQFYDGVIRCLKRMHIKAMPEDAK) enclose the Tudor 2 domain. The interval 183-237 (AKNKTGNKPRTSANSNKDKEKDERKWFKVPSKKEETSTSITTPEVEKKEDLPTSS) is disordered. Residues 186–197 (KTGNKPRTSANS) show a composition bias toward polar residues. Residues 198-218 (NKDKEKDERKWFKVPSKKEET) are compositionally biased toward basic and acidic residues.

Interacts with methylated DNMT1 (DNMT1K142me1). Interacts with SOX2.

The protein resides in the nucleus. Its function is as follows. Is a negative regulator of proteasomal degradation of a set of methylated proteins, including DNMT1 and SOX2. Involved in the maintainance of embryonic stem cells pluripotency, through the regulation of SOX2 levels. This is PHD finger protein 20-like protein 1 (PHF20L1) from Bos taurus (Bovine).